We begin with the raw amino-acid sequence, 1293 residues long: Phosphoribosylformylglycinamidine synthase (1293 aa).

Residues 305–316 and Ala-676 contribute to the ATP site; that span reads GAATGSGGEIRD. A disordered region spans residues 305 to 328; it reads GAATGSGGEIRDEGATGRGSKPKA. Positions 677, 716, 720, and 884 each coordinate Mg(2+). Residue Ser-886 coordinates ATP. Residues 1040-1293 enclose the Glutamine amidotransferase type-1 domain; that stretch reads MAILREQGVN…MFRNARVNLG (254 aa). Cys-1133 acts as the Nucleophile in catalysis. Residues His-1258 and Glu-1260 contribute to the active site.

This sequence in the N-terminal section; belongs to the FGAMS family. In terms of assembly, monomer.

Its subcellular location is the cytoplasm. The catalysed reaction is N(2)-formyl-N(1)-(5-phospho-beta-D-ribosyl)glycinamide + L-glutamine + ATP + H2O = 2-formamido-N(1)-(5-O-phospho-beta-D-ribosyl)acetamidine + L-glutamate + ADP + phosphate + H(+). The protein operates within purine metabolism; IMP biosynthesis via de novo pathway; 5-amino-1-(5-phospho-D-ribosyl)imidazole from N(2)-formyl-N(1)-(5-phospho-D-ribosyl)glycinamide: step 1/2. Its function is as follows. Phosphoribosylformylglycinamidine synthase involved in the purines biosynthetic pathway. Catalyzes the ATP-dependent conversion of formylglycinamide ribonucleotide (FGAR) and glutamine to yield formylglycinamidine ribonucleotide (FGAM) and glutamate. This Shewanella sp. (strain MR-7) protein is Phosphoribosylformylglycinamidine synthase.